Here is a 373-residue protein sequence, read N- to C-terminus: 4-hydroxy-3-methylbut-2-en-1-yl diphosphate synthase (flavodoxin) (373 aa).

[4Fe-4S] cluster is bound by residues Cys270, Cys273, Cys305, and Glu312.

This sequence belongs to the IspG family. [4Fe-4S] cluster is required as a cofactor.

The catalysed reaction is (2E)-4-hydroxy-3-methylbut-2-enyl diphosphate + oxidized [flavodoxin] + H2O + 2 H(+) = 2-C-methyl-D-erythritol 2,4-cyclic diphosphate + reduced [flavodoxin]. Its pathway is isoprenoid biosynthesis; isopentenyl diphosphate biosynthesis via DXP pathway; isopentenyl diphosphate from 1-deoxy-D-xylulose 5-phosphate: step 5/6. In terms of biological role, converts 2C-methyl-D-erythritol 2,4-cyclodiphosphate (ME-2,4cPP) into 1-hydroxy-2-methyl-2-(E)-butenyl 4-diphosphate. This chain is 4-hydroxy-3-methylbut-2-en-1-yl diphosphate synthase (flavodoxin), found in Klebsiella pneumoniae subsp. pneumoniae (strain ATCC 700721 / MGH 78578).